A 92-amino-acid polypeptide reads, in one-letter code: Large ribosomal subunit protein eL43 (92 aa).

Zn(2+)-binding residues include Cys-39, Cys-42, Cys-57, and Cys-60. The C4-type zinc-finger motif lies at 39–60 (CPVCGFPKLKRASTSIWVCGKC).

The protein belongs to the eukaryotic ribosomal protein eL43 family. Putative zinc-binding subfamily. Part of the 50S ribosomal subunit. Zn(2+) is required as a cofactor.

In terms of biological role, binds to the 23S rRNA. In Methanocaldococcus jannaschii (strain ATCC 43067 / DSM 2661 / JAL-1 / JCM 10045 / NBRC 100440) (Methanococcus jannaschii), this protein is Large ribosomal subunit protein eL43.